The following is a 124-amino-acid chain: Large ribosomal subunit protein bL12 (124 aa).

Belongs to the bacterial ribosomal protein bL12 family. As to quaternary structure, homodimer. Part of the ribosomal stalk of the 50S ribosomal subunit. Forms a multimeric L10(L12)X complex, where L10 forms an elongated spine to which 2 to 4 L12 dimers bind in a sequential fashion. Binds GTP-bound translation factors.

Its function is as follows. Forms part of the ribosomal stalk which helps the ribosome interact with GTP-bound translation factors. Is thus essential for accurate translation. The protein is Large ribosomal subunit protein bL12 of Brucella anthropi (strain ATCC 49188 / DSM 6882 / CCUG 24695 / JCM 21032 / LMG 3331 / NBRC 15819 / NCTC 12168 / Alc 37) (Ochrobactrum anthropi).